The primary structure comprises 344 residues: Holliday junction branch migration complex subunit RuvB (344 aa).

The tract at residues 1 to 180 (MSRIVSGEAQ…FGIPVRLEFY (180 aa)) is large ATPase domain (RuvB-L). ATP-binding residues include L19, R20, G61, K64, T65, T66, R170, Y180, and R217. T65 contributes to the Mg(2+) binding site. The tract at residues 181-251 (THDELARVLL…AAAAALARLD (71 aa)) is small ATPAse domain (RuvB-S). The tract at residues 254 to 344 (EVGLDALDRR…AAPPADLFDK (91 aa)) is head domain (RuvB-H). DNA-binding residues include R290, R309, and R314.

This sequence belongs to the RuvB family. As to quaternary structure, homohexamer. Forms an RuvA(8)-RuvB(12)-Holliday junction (HJ) complex. HJ DNA is sandwiched between 2 RuvA tetramers; dsDNA enters through RuvA and exits via RuvB. An RuvB hexamer assembles on each DNA strand where it exits the tetramer. Each RuvB hexamer is contacted by two RuvA subunits (via domain III) on 2 adjacent RuvB subunits; this complex drives branch migration. In the full resolvosome a probable DNA-RuvA(4)-RuvB(12)-RuvC(2) complex forms which resolves the HJ.

It localises to the cytoplasm. The enzyme catalyses ATP + H2O = ADP + phosphate + H(+). The RuvA-RuvB-RuvC complex processes Holliday junction (HJ) DNA during genetic recombination and DNA repair, while the RuvA-RuvB complex plays an important role in the rescue of blocked DNA replication forks via replication fork reversal (RFR). RuvA specifically binds to HJ cruciform DNA, conferring on it an open structure. The RuvB hexamer acts as an ATP-dependent pump, pulling dsDNA into and through the RuvAB complex. RuvB forms 2 homohexamers on either side of HJ DNA bound by 1 or 2 RuvA tetramers; 4 subunits per hexamer contact DNA at a time. Coordinated motions by a converter formed by DNA-disengaged RuvB subunits stimulates ATP hydrolysis and nucleotide exchange. Immobilization of the converter enables RuvB to convert the ATP-contained energy into a lever motion, pulling 2 nucleotides of DNA out of the RuvA tetramer per ATP hydrolyzed, thus driving DNA branch migration. The RuvB motors rotate together with the DNA substrate, which together with the progressing nucleotide cycle form the mechanistic basis for DNA recombination by continuous HJ branch migration. Branch migration allows RuvC to scan DNA until it finds its consensus sequence, where it cleaves and resolves cruciform DNA. In Phenylobacterium zucineum (strain HLK1), this protein is Holliday junction branch migration complex subunit RuvB.